The primary structure comprises 231 residues: Very-long-chain (3R)-3-hydroxyacyl-CoA dehydratase 4 (231 aa).

The Cytoplasmic portion of the chain corresponds to 1 to 19 (MGPVALPTWLQPRYRKNAY). A helical transmembrane segment spans residues 20 to 40 (LFIYYLIQFCGHSWIFTNMTV). At 41–56 (RFFSFGKDSMVDTFYA) the chain is on the lumenal side. A helical membrane pass occupies residues 57–77 (IGLVMQLCQSISLLELLHIYV). Over 78–112 (GIESNHLLPRILQLTERIIVLFMVITSQEEVQEKY) the chain is Cytoplasmic. A helical transmembrane segment spans residues 113 to 133 (VVCVLFIFRNLLDMVRYTYSM). Residues 134–135 (LS) lie on the Lumenal side of the membrane. The helical transmembrane segment at 136-156 (VIGISYAVLTWFSQTLWMPIY) threads the bilayer. Tyr-156 is an active-site residue. Position 157 (Pro-157) is a topological domain, cytoplasmic. Residues 158 to 178 (LCVLAEAFTIYQSLPYFESFG) traverse the membrane as a helical segment. Residue Glu-163 is part of the active site. Residues 179 to 189 (TYSTKLPFDLS) are Lumenal-facing. The helical transmembrane segment at 190–210 (FYFPYVLKIYLMMLFVGMYFT) threads the bilayer. Over 211–231 (YNHLYSERRDILRVFPNKKKM) the chain is Cytoplasmic.

Belongs to the very long-chain fatty acids dehydratase HACD family. As to quaternary structure, may interact with enzymes of the ELO family (including ELOVL1); with those enzymes that mediate condensation, the first of the four steps of the reaction cycle responsible for fatty acids elongation, may be part of a larger fatty acids elongase complex.

The protein resides in the endoplasmic reticulum membrane. The enzyme catalyses a very-long-chain (3R)-3-hydroxyacyl-CoA = a very-long-chain (2E)-enoyl-CoA + H2O. It catalyses the reaction (3R)-hydroxyhexadecanoyl-CoA = (2E)-hexadecenoyl-CoA + H2O. It functions in the pathway lipid metabolism; fatty acid biosynthesis. Functionally, catalyzes the third of the four reactions of the long-chain fatty acids elongation cycle. This endoplasmic reticulum-bound enzymatic process, allows the addition of two carbons to the chain of long- and very long-chain fatty acids/VLCFAs per cycle. This enzyme catalyzes the dehydration of the 3-hydroxyacyl-CoA intermediate into trans-2,3-enoyl-CoA, within each cycle of fatty acid elongation. Thereby, it participates in the production of VLCFAs of different chain lengths that are involved in multiple biological processes as precursors of membrane lipids and lipid mediators. This is Very-long-chain (3R)-3-hydroxyacyl-CoA dehydratase 4 from Bos taurus (Bovine).